The sequence spans 281 residues: Stomatin-4 (281 aa).

The helical transmembrane segment at 28 to 48 threads the bilayer; it reads WIITIISYLVVLFTLPLSAFF.

The protein belongs to the band 7/mec-2 family.

The protein localises to the membrane. The sequence is that of Stomatin-4 (sto-4) from Caenorhabditis elegans.